Here is a 505-residue protein sequence, read N- to C-terminus: Monocarboxylate transporter 10 (505 aa).

The span at Met1–Pro14 shows a compositional bias: acidic residues. The segment at Met1–Pro64 is disordered. Residues Met1–Glu66 lie on the Cytoplasmic side of the membrane. Pro residues predominate over residues Glu15–Glu31. A compositionally biased stretch (acidic residues) spans Pro32–Glu41. A helical membrane pass occupies residues Gly67–Ile87. The Extracellular segment spans residues Gln88–Thr114. The helical transmembrane segment at Ala115–Phe135 threads the bilayer. Residues Thr136–Arg142 are Cytoplasmic-facing. A helical membrane pass occupies residues Ile143–Thr163. Topologically, residues Ser164–Thr171 are extracellular. The chain crosses the membrane as a helical span at residues Tyr172–Gly192. At His193–Gly204 the chain is on the cytoplasmic side. The helical transmembrane segment at Ile205 to Leu225 threads the bilayer. Residues Lys226 to Arg235 are Extracellular-facing. The helical transmembrane segment at Val236–Pro256 threads the bilayer. Residues Lys257 to Arg286 are Cytoplasmic-facing. The chain crosses the membrane as a helical span at residues Ile287–Met307. Over Thr308–Glu321 the chain is Extracellular. Residues Val322–Ala342 traverse the membrane as a helical segment. Asp343 is a topological domain (cytoplasmic). A helical transmembrane segment spans residues Tyr344–Met364. Residues Ser365 to Leu377 are Extracellular-facing. A helical transmembrane segment spans residues Ile378 to Phe400. Residues Glu401–Ala411 lie on the Cytoplasmic side of the membrane. A helical transmembrane segment spans residues Ile412 to Phe432. Topologically, residues Leu433 to Ala443 are extracellular. A helical transmembrane segment spans residues Phe444–Val464. Residues Glu465 to Ile505 lie on the Cytoplasmic side of the membrane. Residues Ala474 to Ile505 are disordered. The span at Thr494–Ile505 shows a compositional bias: basic and acidic residues.

This sequence belongs to the major facilitator superfamily. Monocarboxylate porter (TC 2.A.1.13) family.

The protein resides in the cell membrane. It localises to the basolateral cell membrane. It catalyses the reaction L-tryptophan(in) = L-tryptophan(out). It carries out the reaction L-tyrosine(in) = L-tyrosine(out). The catalysed reaction is L-phenylalanine(in) = L-phenylalanine(out). The enzyme catalyses 3,3',5-triiodo-L-thyronine(out) = 3,3',5-triiodo-L-thyronine(in). It catalyses the reaction L-thyroxine(out) = L-thyroxine(in). Its function is as follows. Sodium- and proton-independent thyroid hormones and aromatic acids transporter. Mediates both uptake and efflux of 3,5,3'-triiodothyronine (T3) and 3,5,3',5'-tetraiodothyronine (T4) with high affinity, suggesting a role in the homeostasis of thyroid hormone levels. Responsible for low affinity bidirectional transport of the aromatic amino acids, such as phenylalanine, tyrosine, tryptophan and L-3,4-dihydroxyphenylalanine (L-dopa). Plays an important role in homeostasis of aromatic amino acids. The polypeptide is Monocarboxylate transporter 10 (slc16a10) (Danio rerio (Zebrafish)).